A 232-amino-acid polypeptide reads, in one-letter code: Cell surface superoxide dismutase [Cu-Zn] 4 (232 aa).

An N-terminal signal peptide occupies residues 1–15 (MKYLSIISIVALALA). N-linked (GlcNAc...) asparagine glycosylation occurs at Asn-53. Residues His-75 and His-77 each coordinate Cu cation. Asn-86 is a glycosylation site (N-linked (GlcNAc...) asparagine). His-93 contacts Cu cation. Position 93 (His-93) interacts with Zn(2+). Residue Asn-98 is glycosylated (N-linked (GlcNAc...) asparagine). Asp-113 contributes to the Zn(2+) binding site. The N-linked (GlcNAc...) asparagine glycan is linked to Asn-120. A Cu cation-binding site is contributed by His-153. Asn-156, Asn-164, Asn-182, Asn-193, and Asn-196 each carry an N-linked (GlcNAc...) asparagine glycan. Low complexity predominate over residues 174-208 (TASAATWSNSSSSSSSSSKNSTNGSSGSSTSASQG). The interval 174–211 (TASAATWSNSSSSSSSSSKNSTNGSSGSSTSASQGSGA) is disordered. Ser-209 carries GPI-anchor amidated serine lipidation. A propeptide spans 210 to 232 (GAGRAEISGFLAAGIAGVVAALI) (removed in mature form). Arg-213 serves as a coordination point for substrate.

The protein belongs to the Cu-Zn superoxide dismutase family. Cu cation serves as cofactor. Zn(2+) is required as a cofactor. The GPI-anchor is attached to the protein in the endoplasmic reticulum and serves to target the protein to the cell surface. There, the glucosamine-inositol phospholipid moiety is cleaved off and the GPI-modified mannoprotein is covalently attached via its lipidless GPI glycan remnant to the 1,6-beta-glucan of the outer cell wall layer.

The protein localises to the secreted. Its subcellular location is the cell wall. It is found in the membrane. The enzyme catalyses 2 superoxide + 2 H(+) = H2O2 + O2. In terms of biological role, superoxide dismutases serve to convert damaging superoxide radicals, a key form of ROS, to less damaging hydrogen peroxide that can be converted into water by catalase action. Degrades host-derived reactive oxygen species to escape innate immune surveillance. Involved in the occurrence of miconazole-tolerant persisters in biofilms. Persisters are cells that survive high doses of an antimicrobial agent. This chain is Cell surface superoxide dismutase [Cu-Zn] 4 (SOD4), found in Candida albicans (strain SC5314 / ATCC MYA-2876) (Yeast).